Consider the following 174-residue polypeptide: tRNA (cytidine(56)-2'-O)-methyltransferase (174 aa).

S-adenosyl-L-methionine is bound by residues Leu83, 108–112 (GAEKV), and 126–133 (VGNQPHSE).

It belongs to the aTrm56 family. As to quaternary structure, homodimer.

It localises to the cytoplasm. The catalysed reaction is cytidine(56) in tRNA + S-adenosyl-L-methionine = 2'-O-methylcytidine(56) in tRNA + S-adenosyl-L-homocysteine + H(+). Functionally, specifically catalyzes the AdoMet-dependent 2'-O-ribose methylation of cytidine at position 56 in tRNAs. This Methanothrix thermoacetophila (strain DSM 6194 / JCM 14653 / NBRC 101360 / PT) (Methanosaeta thermophila) protein is tRNA (cytidine(56)-2'-O)-methyltransferase.